The chain runs to 349 residues: UDP-3-O-acylglucosamine N-acyltransferase 1 (349 aa).

Histidine 241 functions as the Proton acceptor in the catalytic mechanism.

This sequence belongs to the transferase hexapeptide repeat family. LpxD subfamily. As to quaternary structure, homotrimer.

It carries out the reaction a UDP-3-O-[(3R)-3-hydroxyacyl]-alpha-D-glucosamine + a (3R)-hydroxyacyl-[ACP] = a UDP-2-N,3-O-bis[(3R)-3-hydroxyacyl]-alpha-D-glucosamine + holo-[ACP] + H(+). The protein operates within bacterial outer membrane biogenesis; LPS lipid A biosynthesis. In terms of biological role, catalyzes the N-acylation of UDP-3-O-acylglucosamine using 3-hydroxyacyl-ACP as the acyl donor. Is involved in the biosynthesis of lipid A, a phosphorylated glycolipid that anchors the lipopolysaccharide to the outer membrane of the cell. The protein is UDP-3-O-acylglucosamine N-acyltransferase 1 of Gloeobacter violaceus (strain ATCC 29082 / PCC 7421).